The primary structure comprises 273 residues: Endochitinase EP3 (273 aa).

The N-terminal stretch at 1–28 (MLTPTISKSISLVTILLVLQAFSNTTKA) is a signal peptide. A glycan (N-linked (GlcNAc...) asparagine) is linked at asparagine 24. A Chitin-binding type-1 domain is found at 29-63 (QNCGCSSELCCSQFGFCGNTSDYCGVGCQQGPCFA). 4 disulfides stabilise this stretch: cysteine 31–cysteine 39, cysteine 33–cysteine 45, cysteine 38–cysteine 52, and cysteine 56–cysteine 61. N-linked (GlcNAc...) asparagine glycosylation occurs at asparagine 47. The catalytic stretch occupies residues 70–273 (VSVAEIVTQE…GVDPGNNLTC (204 aa)). The active-site Proton donor is the glutamate 136. N-linked (GlcNAc...) asparagine glycans are attached at residues asparagine 157 and asparagine 270.

This sequence belongs to the glycosyl hydrolase 19 family. Chitinase class I subfamily. Expressed in cells surrounding embryos, stems, seedlings, pollen, roots, shoots, inflorescence, flowers, siliques and leaves. Present in seedpods and seed embryos, but not in roots, inflorescence stems, leaves and flowers.

It carries out the reaction Random endo-hydrolysis of N-acetyl-beta-D-glucosaminide (1-&gt;4)-beta-linkages in chitin and chitodextrins.. In terms of biological role, probably involved in hypersensitive reaction upon Xanthomonas campestris infection. The polypeptide is Endochitinase EP3 (Arabidopsis thaliana (Mouse-ear cress)).